A 130-amino-acid chain; its full sequence is Methylglyoxal synthase (130 aa).

Residues 1 to 130 (MSKPRIALIA…DLARNMQDVC (130 aa)) enclose the MGS-like domain. Substrate-binding positions include His-11, Lys-15, 37-40 (TGTT), and 57-58 (SG). The active-site Proton donor/acceptor is Asp-63. His-90 contacts substrate.

The protein belongs to the methylglyoxal synthase family.

The catalysed reaction is dihydroxyacetone phosphate = methylglyoxal + phosphate. Its function is as follows. Catalyzes the formation of methylglyoxal from dihydroxyacetone phosphate. This Burkholderia ambifaria (strain MC40-6) protein is Methylglyoxal synthase.